The following is a 714-amino-acid chain: Fatty acid oxidation complex subunit alpha (714 aa).

Positions 1 to 190 (MEMASAFTLN…KLGLVDDVVP (190 aa)) are enoyl-CoA hydratase. Residues 306–714 (APLNSVGILG…FWKTTATDLQ (409 aa)) form a 3-hydroxyacyl-CoA dehydrogenase region.

In the N-terminal section; belongs to the enoyl-CoA hydratase/isomerase family. It in the central section; belongs to the 3-hydroxyacyl-CoA dehydrogenase family. In terms of assembly, heterotetramer of two alpha chains (FadJ) and two beta chains (FadI).

The protein resides in the cytoplasm. The enzyme catalyses a (3S)-3-hydroxyacyl-CoA = a (2E)-enoyl-CoA + H2O. It catalyses the reaction a 4-saturated-(3S)-3-hydroxyacyl-CoA = a (3E)-enoyl-CoA + H2O. The catalysed reaction is a (3S)-3-hydroxyacyl-CoA + NAD(+) = a 3-oxoacyl-CoA + NADH + H(+). It carries out the reaction (3S)-3-hydroxybutanoyl-CoA = (3R)-3-hydroxybutanoyl-CoA. The protein operates within lipid metabolism; fatty acid beta-oxidation. In terms of biological role, catalyzes the formation of a hydroxyacyl-CoA by addition of water on enoyl-CoA. Also exhibits 3-hydroxyacyl-CoA epimerase and 3-hydroxyacyl-CoA dehydrogenase activities. This is Fatty acid oxidation complex subunit alpha from Escherichia coli (strain SMS-3-5 / SECEC).